Here is a 54-residue protein sequence, read N- to C-terminus: Potassium channel toxin alpha-KTx 14.1 (54 aa).

Residues 1-23 (MKIFFAILLILAVCSMAIWTVNG) form the signal peptide.

Belongs to the short scorpion toxin superfamily. Potassium channel inhibitor family. Alpha-KTx 14 subfamily. In terms of processing, probably has three disulfide bridges. Expressed by the venom gland.

The protein resides in the secreted. In terms of biological role, potential blocker of potassium channels. This Olivierus martensii (Manchurian scorpion) protein is Potassium channel toxin alpha-KTx 14.1.